The chain runs to 88 residues: Beta-insect excitatory toxin 1 (88 aa).

The signal sequence occupies residues 1-18; the sequence is MKFLLLFLVVLPIMGVFG. The 64-residue stretch at 20-83 folds into the LCN-type CS-alpha/beta domain; the sequence is KNGYAVDSSG…ISDTRKSYCD (64 aa). Cystine bridges form between C34/C55, C40/C60, C44/C62, and C56/C82.

This sequence belongs to the long (4 C-C) scorpion toxin superfamily. Sodium channel inhibitor family. Beta subfamily. Expressed by the venom gland.

The protein localises to the secreted. Its function is as follows. Excitatory insect beta-toxins induce a spastic paralysis. They bind voltage-independently at site-4 of sodium channels (Nav) and shift the voltage of activation toward more negative potentials thereby affecting sodium channel activation and promoting spontaneous and repetitive firing. This toxin is active only on insects. The protein is Beta-insect excitatory toxin 1 of Androctonus australis (Sahara scorpion).